The primary structure comprises 76 residues: MEELLKYIVASLVEFPEEIVIREIEGEEQNIIELRVSPKDVGKVIGKNGRIAKSLRAILTAASVKAGKNFSLEIID.

The region spanning 29–76 (QNIIELRVSPKDVGKVIGKNGRIAKSLRAILTAASVKAGKNFSLEIID) is the KH domain.

It belongs to the KhpA RNA-binding protein family. Forms a complex with KhpB.

It localises to the cytoplasm. Its function is as follows. A probable RNA chaperone. Forms a complex with KhpB which binds to cellular RNA and controls its expression. Plays a role in peptidoglycan (PG) homeostasis and cell length regulation. The protein is RNA-binding protein KhpA of Leptospira interrogans serogroup Icterohaemorrhagiae serovar copenhageni (strain Fiocruz L1-130).